We begin with the raw amino-acid sequence, 270 residues long: Chymotrypsin-like elastase family member 3B (270 aa).

Positions 1–15 (MMLRLLSSLLLVAVA) form a signal peptide, or 16. Positions 16–28 (SGYGPPSSRPSSR) are cleaved as a propeptide — activation peptide. The Peptidase S1 domain occupies 29-268 (VVNGEDAVPY…FIDWIEETIA (240 aa)). Cysteines 58 and 74 form a disulfide. His-73 (charge relay system) is an active-site residue. N-linked (GlcNAc...) asparagine glycosylation occurs at Asn-114. The cysteines at positions 117 and 120 are disulfide-linked. The Charge relay system role is filled by Asp-123. Disulfide bonds link Cys-157-Cys-223, Cys-188-Cys-204, and Cys-213-Cys-244. Ser-217 acts as the Charge relay system in catalysis.

The protein belongs to the peptidase S1 family. Elastase subfamily. In terms of tissue distribution, pancreas. Not detectable in keratinocytes.

It catalyses the reaction Preferential cleavage: Ala-|-Xaa. Does not hydrolyze elastin.. Its function is as follows. Efficient protease with alanine specificity but only little elastolytic activity. This chain is Chymotrypsin-like elastase family member 3B (CELA3B), found in Homo sapiens (Human).